Consider the following 186-residue polypeptide: uncharacterized protein (186 aa).

Helical transmembrane passes span 42 to 62 (ISIA…LSVL), 80 to 100 (LLFL…IGLV), and 131 to 151 (ICGI…FIVL).

This sequence to U.parvum UU008, UU041 and UU042.

The protein resides in the cell membrane. This is an uncharacterized protein from Ureaplasma parvum serovar 3 (strain ATCC 700970).